Reading from the N-terminus, the 414-residue chain is E3 ubiquitin-protein ligase makorin-2 (414 aa).

C3H1-type zinc fingers lie at residues 2–29 (STKQ…HDLT) and 31–58 (SKPS…HIKP). The segment at 57–94 (KPPGRGSGAPADHSNRSSSSAGASAPGPGPPANTSKHL) is disordered. Residues 73 to 82 (SSSSAGASAP) show a composition bias toward low complexity. A C3H1-type 3 zinc finger spans residues 164 to 191 (QTSPQICPFLAAGQCQYGESCPYLHGEM). A makorin-type Cys-His region spans residues 192-221 (CEICRQHVLHPHDPEQRAAHEKKCMVAFEM). The RING-type zinc finger occupies 237–291 (CKICLDVVYEKSSPSERRFGILSSCAHTYCLNCIRQWRCVEQLHNQIRKSCPECR). A C3H1-type 4 zinc finger spans residues 320-349 (GVSKKACKYFDQGRGTCPFGGKCFYMHAYA).

It is found in the cytoplasm. The protein localises to the nucleus. It catalyses the reaction S-ubiquitinyl-[E2 ubiquitin-conjugating enzyme]-L-cysteine + [acceptor protein]-L-lysine = [E2 ubiquitin-conjugating enzyme]-L-cysteine + N(6)-ubiquitinyl-[acceptor protein]-L-lysine.. It functions in the pathway protein modification; protein ubiquitination. In terms of biological role, E3 ubiquitin ligase catalyzing the covalent attachment of ubiquitin moieties onto substrate proteins. Inhibits neurogenesis and axis formation during embryonic development by modulating the phosphatidylinositol 3-kinase (PI3K) pathway. Acts downstream of PI3K and akt1 to up-regulate gsk3b mRNA expression. In Danio rerio (Zebrafish), this protein is E3 ubiquitin-protein ligase makorin-2 (mkrn2).